Consider the following 457-residue polypeptide: Siroheme synthase (457 aa).

A precorrin-2 dehydrogenase /sirohydrochlorin ferrochelatase region spans residues 1-204 (MDHLPIFCQL…ADAKAVSEIT (204 aa)). NAD(+) is bound by residues 22 to 23 (DV) and 43 to 44 (LA). Ser-128 is subject to Phosphoserine. Positions 216-457 (GEVVLVGAGP…RDKLNWFSNH (242 aa)) are uroporphyrinogen-III C-methyltransferase. Position 225 (Pro-225) interacts with S-adenosyl-L-methionine. The Proton acceptor role is filled by Asp-248. Lys-270 serves as the catalytic Proton donor. Residues 301 to 303 (GGD), Ile-306, 331 to 332 (TA), Met-382, and Gly-411 each bind S-adenosyl-L-methionine.

This sequence in the N-terminal section; belongs to the precorrin-2 dehydrogenase / sirohydrochlorin ferrochelatase family. It in the C-terminal section; belongs to the precorrin methyltransferase family.

The enzyme catalyses uroporphyrinogen III + 2 S-adenosyl-L-methionine = precorrin-2 + 2 S-adenosyl-L-homocysteine + H(+). It catalyses the reaction precorrin-2 + NAD(+) = sirohydrochlorin + NADH + 2 H(+). It carries out the reaction siroheme + 2 H(+) = sirohydrochlorin + Fe(2+). It participates in cofactor biosynthesis; adenosylcobalamin biosynthesis; precorrin-2 from uroporphyrinogen III: step 1/1. It functions in the pathway cofactor biosynthesis; adenosylcobalamin biosynthesis; sirohydrochlorin from precorrin-2: step 1/1. Its pathway is porphyrin-containing compound metabolism; siroheme biosynthesis; precorrin-2 from uroporphyrinogen III: step 1/1. The protein operates within porphyrin-containing compound metabolism; siroheme biosynthesis; siroheme from sirohydrochlorin: step 1/1. It participates in porphyrin-containing compound metabolism; siroheme biosynthesis; sirohydrochlorin from precorrin-2: step 1/1. Multifunctional enzyme that catalyzes the SAM-dependent methylations of uroporphyrinogen III at position C-2 and C-7 to form precorrin-2 via precorrin-1. Then it catalyzes the NAD-dependent ring dehydrogenation of precorrin-2 to yield sirohydrochlorin. Finally, it catalyzes the ferrochelation of sirohydrochlorin to yield siroheme. This is Siroheme synthase from Citrobacter koseri (strain ATCC BAA-895 / CDC 4225-83 / SGSC4696).